We begin with the raw amino-acid sequence, 178 residues long: Protein-export protein SecB (178 aa).

Over residues 1-13 the composition is skewed to acidic residues; sequence MADEGDVLTDLDM. Residues 1-25 are disordered; that stretch reads MADEGDVLTDLDMDPAAGGNGADNR.

The protein belongs to the SecB family. As to quaternary structure, homotetramer, a dimer of dimers. One homotetramer interacts with 1 SecA dimer.

The protein resides in the cytoplasm. Its function is as follows. One of the proteins required for the normal export of preproteins out of the cell cytoplasm. It is a molecular chaperone that binds to a subset of precursor proteins, maintaining them in a translocation-competent state. It also specifically binds to its receptor SecA. The protein is Protein-export protein SecB of Erythrobacter litoralis (strain HTCC2594).